A 380-amino-acid chain; its full sequence is Glycerate kinase (380 aa).

It belongs to the glycerate kinase type-1 family.

The enzyme catalyses (R)-glycerate + ATP = (2R)-3-phosphoglycerate + ADP + H(+). The protein is Glycerate kinase (glxK) of Halalkalibacterium halodurans (strain ATCC BAA-125 / DSM 18197 / FERM 7344 / JCM 9153 / C-125) (Bacillus halodurans).